We begin with the raw amino-acid sequence, 362 residues long: Glutaminase-asparaginase (362 aa).

The first 25 residues, Met-1–Ala-25, serve as a signal peptide directing secretion. The 328-residue stretch at Ala-35–Tyr-362 folds into the Asparaginase/glutaminase domain. Residue Thr-45 is the Acyl-ester intermediate of the active site. Residues Ser-92 and Thr-125–Asp-126 each bind substrate.

It belongs to the asparaginase 1 family. As to quaternary structure, homotetramer.

The protein localises to the periplasm. The enzyme catalyses L-glutamine + H2O = L-glutamate + NH4(+). The catalysed reaction is L-asparagine + H2O = L-aspartate + NH4(+). In Pseudomonas putida (strain ATCC 47054 / DSM 6125 / CFBP 8728 / NCIMB 11950 / KT2440), this protein is Glutaminase-asparaginase (ansB).